A 255-amino-acid chain; its full sequence is Aspartate/glutamate leucyltransferase (255 aa).

This sequence belongs to the R-transferase family. Bpt subfamily.

It is found in the cytoplasm. It catalyses the reaction N-terminal L-glutamyl-[protein] + L-leucyl-tRNA(Leu) = N-terminal L-leucyl-L-glutamyl-[protein] + tRNA(Leu) + H(+). It carries out the reaction N-terminal L-aspartyl-[protein] + L-leucyl-tRNA(Leu) = N-terminal L-leucyl-L-aspartyl-[protein] + tRNA(Leu) + H(+). Functions in the N-end rule pathway of protein degradation where it conjugates Leu from its aminoacyl-tRNA to the N-termini of proteins containing an N-terminal aspartate or glutamate. This is Aspartate/glutamate leucyltransferase from Leptospira borgpetersenii serovar Hardjo-bovis (strain JB197).